A 184-amino-acid chain; its full sequence is Bacterial microcompartment shell protein PduT (184 aa).

BMC domains follow at residues A4–S86 and A96–V182. Position 38 (C38) interacts with [4Fe-4S] cluster.

It belongs to the bacterial microcompartments protein family. In terms of assembly, homotrimerizes to form a pseudohexamer with a large central pore, which is probably the binding site for the [4Fe-4S] center. Interacts with PduS. Originally suggested to be a homotetramer; this is incorrect. Requires [4Fe-4S] cluster as cofactor.

Its subcellular location is the bacterial microcompartment. It functions in the pathway polyol metabolism; 1,2-propanediol degradation. In terms of biological role, a minor shell protein of the bacterial microcompartment (BMC) dedicated to 1,2-propanediol (1,2-PD) degradation. Overexpression of this protein leads to cells with either deposits or having lamina-like structures in the cytoplasm. Not absolutely required to make artificial BMCs. May selectively transport specific metabolites. Functionally, expression of a cosmid containing the full 21-gene pdu operon in E.coli allows E.coli to grow on 1,2-propanediol (1,2-PD) with the appearance of bacterial microcompartments (BMC) in its cytoplasm. Its function is as follows. The 1,2-PD-specific bacterial microcompartment (BMC) concentrates low levels of 1,2-PD catabolic enzymes, concentrates volatile reaction intermediates thus enhancing pathway flux and keeps the level of toxic, mutagenic propionaldehyde low. This chain is Bacterial microcompartment shell protein PduT, found in Citrobacter freundii.